The primary structure comprises 121 residues: Large ribosomal subunit protein uL22 (121 aa).

It belongs to the universal ribosomal protein uL22 family. As to quaternary structure, part of the 50S ribosomal subunit.

Its function is as follows. This protein binds specifically to 23S rRNA; its binding is stimulated by other ribosomal proteins, e.g. L4, L17, and L20. It is important during the early stages of 50S assembly. It makes multiple contacts with different domains of the 23S rRNA in the assembled 50S subunit and ribosome. Functionally, the globular domain of the protein is located near the polypeptide exit tunnel on the outside of the subunit, while an extended beta-hairpin is found that lines the wall of the exit tunnel in the center of the 70S ribosome. In Kocuria rhizophila (strain ATCC 9341 / DSM 348 / NBRC 103217 / DC2201), this protein is Large ribosomal subunit protein uL22.